Here is a 218-residue protein sequence, read N- to C-terminus: Glutathione S-transferase Mu 5 (218 aa).

The 87-residue stretch at 2–88 folds into the GST N-terminal domain; the sequence is PMTLGYWDIR…YIARKHNLCG (87 aa). Residues 7-8, 46-50, 59-60, and 72-73 each bind glutathione; these read YW, WLNEK, NL, and QS. The region spanning 90-207 is the GST C-terminal domain; it reads TEEEKIRVDI…MKSSQFLRGL (118 aa). A substrate-binding site is contributed by tyrosine 116.

Belongs to the GST superfamily. Mu family. As to quaternary structure, homodimer.

The protein localises to the cytoplasm. The enzyme catalyses RX + glutathione = an S-substituted glutathione + a halide anion + H(+). Functionally, conjugation of reduced glutathione to a wide number of exogenous and endogenous hydrophobic electrophiles. The sequence is that of Glutathione S-transferase Mu 5 (GSTM5) from Homo sapiens (Human).